Reading from the N-terminus, the 145-residue chain is Hemoglobin subunit beta (145 aa).

In terms of domain architecture, Globin spans 1–145 (MLTAEEKAAV…VANALAHRYH (145 aa)). At threonine 11 the chain carries Phosphothreonine. Serine 43 is subject to Phosphoserine. Lysine 58 carries the post-translational modification N6-acetyllysine. Histidine 62 is a heme b binding site. The residue at position 81 (lysine 81) is an N6-acetyllysine. Residue histidine 91 participates in heme b binding. Residue cysteine 92 is modified to S-nitrosocysteine.

This sequence belongs to the globin family. In terms of assembly, heterotetramer of two alpha chains and two beta chains. In terms of tissue distribution, red blood cells.

Functionally, involved in oxygen transport from the lung to the various peripheral tissues. In terms of biological role, functions as an endogenous inhibitor of enkephalin-degrading enzymes such as DPP3, and may thereby play a role as a regulator of pain and inflammation. The protein is Hemoglobin subunit beta (HBB) of Bos taurus (Bovine).